Here is a 118-residue protein sequence, read N- to C-terminus: Vesicle-associated membrane protein 1 (118 aa).

Residues 1 to 15 (MSAPAQPPAEGTEGA) show a composition bias toward low complexity. Residues 1 to 38 (MSAPAQPPAEGTEGAAPGGGPPGPPPNTTSNRRLQQTQ) form a disordered region. Residues 1–96 (MSAPAQPPAE…KRKYWWKNCK (96 aa)) lie on the Cytoplasmic side of the membrane. Residues 28 to 38 (TTSNRRLQQTQ) are compositionally biased toward polar residues. Residues 33–93 (RLQQTQAQVE…AKLKRKYWWK (61 aa)) enclose the v-SNARE coiled-coil homology domain. Position 63 is a phosphoserine (S63). A helical; Anchor for type IV membrane protein transmembrane segment spans residues 97-116 (MMIMLGAICAIIVVVIVIYI). The Vesicular portion of the chain corresponds to 117–118 (FT).

Belongs to the synaptobrevin family. In terms of assembly, interacts with VAPA and VAPB. (Microbial infection) Targeted and hydrolyzed by C.botulinum neurotoxin type D (BoNT/D, botD) which hydrolyzes the 61-Lys-|-Leu-62 bond and inhibits neurotransmitter release. This is a poor substrate for BoNT/D, high concentrations are required to cleave it in vitro. Post-translationally, (Microbial infection) Targeted and hydrolyzed by C.botulinum neurotoxin type F (BoNT/F, botF) which hydrolyzes the 60-Gln-|-Lys-61 bond and inhibits neurotransmitter release. As to expression, expressed in brain and spleen (at protein level). Isoform 1 expressed at very high level in brain. Even higher level found in spinal cord. Isoform 3 expressed in kidney, spleen and liver. Isoforms 2 and 3 expressed in osteoblasts of trabecular bone. Also expressed in heart.

The protein localises to the cytoplasmic vesicle. The protein resides in the secretory vesicle. Its subcellular location is the synaptic vesicle membrane. It is found in the synapse. It localises to the synaptosome. The protein localises to the cytoplasmic vesicle membrane. The protein resides in the mitochondrion outer membrane. Functionally, involved in the targeting and/or fusion of transport vesicles to their target membrane. This Rattus norvegicus (Rat) protein is Vesicle-associated membrane protein 1 (Vamp1).